We begin with the raw amino-acid sequence, 427 residues long: Light-independent protochlorophyllide reductase subunit N (427 aa).

Positions 29, 54, and 115 each coordinate [4Fe-4S] cluster.

The protein belongs to the BchN/ChlN family. As to quaternary structure, protochlorophyllide reductase is composed of three subunits; BchL, BchN and BchB. Forms a heterotetramer of two BchB and two BchN subunits. [4Fe-4S] cluster is required as a cofactor.

The catalysed reaction is chlorophyllide a + oxidized 2[4Fe-4S]-[ferredoxin] + 2 ADP + 2 phosphate = protochlorophyllide a + reduced 2[4Fe-4S]-[ferredoxin] + 2 ATP + 2 H2O. It participates in porphyrin-containing compound metabolism; bacteriochlorophyll biosynthesis (light-independent). Component of the dark-operative protochlorophyllide reductase (DPOR) that uses Mg-ATP and reduced ferredoxin to reduce ring D of protochlorophyllide (Pchlide) to form chlorophyllide a (Chlide). This reaction is light-independent. The NB-protein (BchN-BchB) is the catalytic component of the complex. The protein is Light-independent protochlorophyllide reductase subunit N of Bradyrhizobium sp. (strain ORS 278).